The primary structure comprises 132 residues: Succinate dehydrogenase cytochrome b560 subunit (132 aa).

2 helical membrane passes run 32 to 49 (LYLVFFLFVLFCSIKFLF) and 59 to 81 (KFVKTCFFFILSFFIVFIVFSMY). Position 86 (His-86) interacts with heme. The helical transmembrane segment at 107–127 (VTMSTKLSLSLSLVLVLINCL) threads the bilayer.

The protein belongs to the cytochrome b560 family. As to quaternary structure, forms part of complex II containing four subunits: a 70 kDa flavoprotein (FP), a 27 kDa iron-sulfur protein (IP), a cytochrome B and a membrane-anchoring protein. Heme serves as cofactor.

It localises to the mitochondrion inner membrane. Its pathway is carbohydrate metabolism; tricarboxylic acid cycle. Functionally, membrane-anchoring subunit of succinate dehydrogenase (SDH) that is involved in complex II of the mitochondrial electron transport chain and is responsible for transferring electrons from succinate to ubiquinone (coenzyme Q). This chain is Succinate dehydrogenase cytochrome b560 subunit (SDH3), found in Cyanidium caldarium (Red alga).